The following is a 173-amino-acid chain: Crossover junction endodeoxyribonuclease RuvC (173 aa).

Residues Asp8, Glu67, and Asp139 contribute to the active site. The Mg(2+) site is built by Asp8, Glu67, and Asp139.

This sequence belongs to the RuvC family. In terms of assembly, homodimer which binds Holliday junction (HJ) DNA. The HJ becomes 2-fold symmetrical on binding to RuvC with unstacked arms; it has a different conformation from HJ DNA in complex with RuvA. In the full resolvosome a probable DNA-RuvA(4)-RuvB(12)-RuvC(2) complex forms which resolves the HJ. The cofactor is Mg(2+).

Its subcellular location is the cytoplasm. It catalyses the reaction Endonucleolytic cleavage at a junction such as a reciprocal single-stranded crossover between two homologous DNA duplexes (Holliday junction).. Its function is as follows. The RuvA-RuvB-RuvC complex processes Holliday junction (HJ) DNA during genetic recombination and DNA repair. Endonuclease that resolves HJ intermediates. Cleaves cruciform DNA by making single-stranded nicks across the HJ at symmetrical positions within the homologous arms, yielding a 5'-phosphate and a 3'-hydroxyl group; requires a central core of homology in the junction. The consensus cleavage sequence is 5'-(A/T)TT(C/G)-3'. Cleavage occurs on the 3'-side of the TT dinucleotide at the point of strand exchange. HJ branch migration catalyzed by RuvA-RuvB allows RuvC to scan DNA until it finds its consensus sequence, where it cleaves and resolves the cruciform DNA. The protein is Crossover junction endodeoxyribonuclease RuvC of Klebsiella pneumoniae subsp. pneumoniae (strain ATCC 700721 / MGH 78578).